The primary structure comprises 137 residues: Small ribosomal subunit protein bS6 (137 aa).

The interval 96-137 (ITEASPMAKAKDERDTRRSSEERAPRAEATEEAEESAENTAE) is disordered. Positions 104–124 (KAKDERDTRRSSEERAPRAEA) are enriched in basic and acidic residues. Residues 125–137 (TEEAEESAENTAE) show a composition bias toward acidic residues.

This sequence belongs to the bacterial ribosomal protein bS6 family.

Functionally, binds together with bS18 to 16S ribosomal RNA. This is Small ribosomal subunit protein bS6 from Shewanella pealeana (strain ATCC 700345 / ANG-SQ1).